Consider the following 1355-residue polypeptide: Collagen alpha-2(I) chain (1355 aa).

A signal peptide spans 1–22 (MLSFVDLRSVLLLAVTLYLVTC). A Pyrrolidone carboxylic acid modification is found at Gln-23. Positions 23-71 (QEVRRGPRGDKGPPGEQGPPGIPGRDGEDGLPGLPGPPGVPGLGGNFAA) are cleaved as a propeptide — N-terminal propeptide. The span at 26-35 (RRGPRGDKGP) shows a compositional bias: basic and acidic residues. The segment at 26–1111 (RRGPRGDKGP…GDGGEYYRAD (1086 aa)) is disordered. The residue at position 72 (Gln-72) is a Pyrrolidone carboxylic acid. The residue at position 77 (Lys-77) is an Allysine. The segment covering 99–108 (PGSQGFQGLP) has biased composition (low complexity). The segment covering 132–146 (AGEDGHPGKSGRPGE) has biased composition (basic and acidic residues). Lys-168 carries the 5-hydroxylysine; alternate modification. Lys-168 is a glycosylation site (O-linked (Gal...) hydroxylysine; alternate). The span at 218–267 (PAGSAGSRGSDGSSGPVGPAGPIGSAGAPGLPGAPGAKGELGPAGNNGPT) shows a compositional bias: low complexity. Over residues 276–290 (PGPPGSLGPAGPPGN) the composition is skewed to pro residues. Low complexity predominate over residues 291–303 (PGTNGVNGAKGTA). Residues 304–322 (GLPGVGGAPGLPGGRGIPG) show a composition bias toward gly residues. Residues 327–336 (AGPSGARGLA) show a composition bias toward low complexity. Composition is skewed to gly residues over residues 340–349 (GIAGGKGDTG) and 403–412 (GRAGGIGPAG). Low complexity-rich tracts occupy residues 413–426 (SRGSSGPPGARGPN) and 465–495 (EGRSGAAGPAGARGEPGAIGFPGPKGPNGEP). Gly residues-rich tracts occupy residues 523-532 (GPAGLGGATG) and 586-595 (GESGGAGPHG). The segment covering 596 to 618 (PSGSRGPSGAPGPDGQKGEPGAA) has biased composition (low complexity). A compositionally biased stretch (gly residues) spans 619–628 (GLNGGLGPSG). 3 stretches are compositionally biased toward low complexity: residues 659–675 (NPGRDGARGPAGAAGAP), 687–701 (SGPAGPSGVAGPRGA), and 708–726 (AGPAGPTGFAGPPGAAGHT). Residues 728–738 (AKGDRGAKGPK) show a composition bias toward basic and acidic residues. Composition is skewed to low complexity over residues 741 to 767 (AGSPGPLGAHGSAGPAGPNGPAGSTGA) and 776 to 788 (ATGFPGPAGRAGA). Positions 804–813 (PGKDGSRGPR) are enriched in basic and acidic residues. Residues 852-869 (AGPSGVLGARGILGLPGT) are compositionally biased toward low complexity. Positions 874-883 (GLPGGPGSNG) are enriched in gly residues. Low complexity-rich tracts occupy residues 884–912 (EPGPSGLAGSSGPRGPPGSVGSPGPVGHS) and 947–966 (PSGLAGAPGPAGSAGPAGKS). The span at 967 to 976 (GNRGEGGPSG) shows a compositional bias: gly residues. Basic and acidic residues predominate over residues 996–1014 (RGDKGEAGERGARGLDGRK). The span at 1019 to 1041 (LSGLPGPSGTPGETGPSGSVGPV) shows a compositional bias: low complexity. Residues 1080 to 1091 (AGPPGPPGPPGH) show a composition bias toward pro residues. Residues 1093–1105 (GPSGGGYDGGDGG) show a composition bias toward gly residues. Residues 1111–1355 (DQPERKPKDY…GFEIGPVCFK (245 aa)) constitute a propeptide, C-terminal propeptide. The Fibrillar collagen NC1 domain occupies 1120–1355 (YEVDATLKSL…GFEIGPVCFK (236 aa)). 3 cysteine pairs are disulfide-bonded: Cys-1150–Cys-1182, Cys-1190–Cys-1353, and Cys-1261–Cys-1306. Ca(2+) is bound by residues Asp-1168, Asn-1170, Gln-1171, Cys-1173, and Asp-1176. Residues Asn-1206 and Asn-1256 are each glycosylated (N-linked (GlcNAc...) asparagine).

It belongs to the fibrillar collagen family. In terms of assembly, trimers of one alpha 2(I) and two alpha 1(I) chains. Post-translationally, prolines at the third position of the tripeptide repeating unit (G-X-Y) are hydroxylated in some or all of the chains. As to expression, forms the fibrils of tendon, ligaments and bones. In bones the fibrils are mineralized with calcium hydroxyapatite.

It localises to the secreted. The protein resides in the extracellular space. Its subcellular location is the extracellular matrix. Its function is as follows. Type I collagen is a member of group I collagen (fibrillar forming collagen). In Aquarana catesbeiana (American bullfrog), this protein is Collagen alpha-2(I) chain (COL1A2).